A 139-amino-acid chain; its full sequence is uncharacterized protein (139 aa).

This is an uncharacterized protein from Saccharolobus islandicus (Sulfolobus islandicus).